A 679-amino-acid polypeptide reads, in one-letter code: Methyl-accepting chemotaxis protein McpB (679 aa).

3 divergent domain HAMP regions span residues 8 to 56, 63 to 112, and 111 to 156; these read AVAQ…RQLR, QQVE…AAHI, and HIAV…ERLR. A PAS domain is found at 171–213; the sequence is YNARIKSALDNVSANVMIADNDLNIIYMNRTVSEMLGRAEADI. His-234 is a binding site for heme. The short motif at 285 to 287 is the DxT. Important for signal propagation element; it reads DRT. A divergent domain HAMP 4 region spans residues 289-332; it reads EHRAEQEVSQLVQAAAAGDFSKRVEEAGKEGFFLRLAKDLNSLV. The HAMP 5 domain occupies 333 to 385; sequence DTADRGLRDVSRMLGALAQGDLTQRIEADYQGTFGQLKDFSNDTAQSLSRMLG. Positions 390–619 constitute a Methyl-accepting transducer domain; the sequence is AADTINTAAS…EAAAAAEAMQ (230 aa). 2 disordered regions span residues 405 to 425 and 644 to 679; these read NAELSARTEQQASSLEETASS and ASARPSAPRPSAPAPLARSGMARASKARKEDGWEEF. The segment covering 411–425 has biased composition (polar residues); it reads RTEQQASSLEETASS. Basic and acidic residues predominate over residues 670–679; sequence ARKEDGWEEF. The short motif at 675-679 is the GWEEF pentapeptide. Important for methylation by CheR2 element; sequence GWEEF.

The protein belongs to the methyl-accepting chemotaxis (MCP) protein family. In terms of assembly, homodimer. The PAS domains form dimers in the presence and absence of oxygen. Interacts with the methyltransferase CheR2 via the C-terminal McpB pentapeptide GWEEF. Interacts with the methylesterase/gutaminase CheB2, which also binds to the GWEEF pentapeptide. Post-translationally, methylated by CheR2, but not by CheR1, CheR3 or WspC. Demethylated by CheB2. In vitro, can be methylated by E.coli CheR.

The protein resides in the cytoplasm. Its function is as follows. Chemoreceptor that plays a critical role in the virulence and pathogenesis of P.aeruginosa in a variety of hosts. Probably acts through oxygen sensing. Uses a heme-based sensor. Could be involved in chemotaxis. When expressed in E.coli, is able to sense and mediate repellent responses to oxygen, carbon monoxide and nitric oxide. This chain is Methyl-accepting chemotaxis protein McpB, found in Pseudomonas aeruginosa (strain ATCC 15692 / DSM 22644 / CIP 104116 / JCM 14847 / LMG 12228 / 1C / PRS 101 / PAO1).